We begin with the raw amino-acid sequence, 461 residues long: Probable outer membrane lipoprotein SilC (461 aa).

Residues 1-17 (MFKLKLLSISTIFILAG) form the signal peptide. Residue Cys-18 is the site of N-palmitoyl cysteine attachment. Cys-18 carries the S-diacylglycerol cysteine lipid modification.

It belongs to the outer membrane factor (OMF) (TC 1.B.17) family.

It localises to the cell outer membrane. In terms of biological role, component of the sil cation-efflux system that confers resistance to silver. May be part of a three-component cation/proton antiporter. The chain is Probable outer membrane lipoprotein SilC (silC) from Salmonella typhimurium.